Reading from the N-terminus, the 345-residue chain is Putative membrane protein ORF59 (345 aa).

The next 4 helical transmembrane spans lie at 46–63 (LVFAYVTLVLLYVIMMLI), 101–118 (IVFVALGVNFLLVILVFL), 147–165 (IFGIMSFIFVFIITVFSIL), and 265–286 (VVPVILLVMFILYMFLHLWMVI).

Its subcellular location is the membrane. In Ictalurid herpesvirus 1 (strain Auburn) (IcHV-1), this protein is Putative membrane protein ORF59 (ORF59).